Consider the following 775-residue polypeptide: 5-methyltetrahydropteroyltriglutamate--homocysteine methyltransferase (775 aa).

Residues Arg-15 to Lys-18 and Lys-118 contribute to the 5-methyltetrahydropteroyltri-L-glutamate site. L-homocysteine-binding positions include Ile-448 to Ser-450 and Glu-501. L-methionine-binding positions include Ile-448 to Ser-450 and Glu-501. 5-methyltetrahydropteroyltri-L-glutamate is bound by residues Arg-532–Cys-533 and Trp-578. Asp-616 serves as a coordination point for L-homocysteine. Residue Asp-616 coordinates L-methionine. Glu-622 is a 5-methyltetrahydropteroyltri-L-glutamate binding site. Zn(2+) is bound by residues His-658, Cys-660, and Glu-682. His-711 functions as the Proton donor in the catalytic mechanism. Cys-743 lines the Zn(2+) pocket.

The protein belongs to the vitamin-B12 independent methionine synthase family. The cofactor is Zn(2+).

It catalyses the reaction 5-methyltetrahydropteroyltri-L-glutamate + L-homocysteine = tetrahydropteroyltri-L-glutamate + L-methionine. Its pathway is amino-acid biosynthesis; L-methionine biosynthesis via de novo pathway; L-methionine from L-homocysteine (MetE route): step 1/1. Catalyzes the transfer of a methyl group from 5-methyltetrahydrofolate to homocysteine resulting in methionine formation. This Cytophaga hutchinsonii (strain ATCC 33406 / DSM 1761 / CIP 103989 / NBRC 15051 / NCIMB 9469 / D465) protein is 5-methyltetrahydropteroyltriglutamate--homocysteine methyltransferase.